Consider the following 31-residue polypeptide: uncharacterized protein (31 aa).

Residues Thr-7–Trp-29 traverse the membrane as a helical segment.

The protein localises to the cell inner membrane. This is an uncharacterized protein from Escherichia coli (strain K12).